A 367-amino-acid polypeptide reads, in one-letter code: MLYYLLKYINEVFDPPGLGVIEYLTFRASAAAITALLITLVAGPGFIALLRARFIEPVKEEAPPEHRKKKLPTMGGLLIIISVEVSVLLWAKFTDPHVWLIMLALLWMGVIGFIDDYSKVVLKVKGGLSARWKLVGQISLGLVVGIYTSMDPVFSVLMRETTVPFFKNLTIDYGIFYVPVVIFIITALSNAVNLTDGLDGLAAGSSAIVIFGLGGFAYLAGNVVYASYLSIPFIPGGGEIAVVCMAATMACVGFLWFNANPAEIIMGDTGSLALGSTIAVTALLIKQELLLPVLGGLFFLETLSVSLQVLYFKYTRMRFGEGRRIFLMAPLHHHFQLKGWAEQKIVIRFWIVTILLFLTSLMTLKLR.

The next 10 membrane-spanning stretches (helical) occupy residues Ala30–Leu50, Leu71–Ala91, Thr94–Ile114, Ile138–Met158, Leu169–Ser189, Gly200–Ala220, Gly237–Phe257, Ile264–Leu284, Leu289–Val309, and Lys344–Leu364.

This sequence belongs to the glycosyltransferase 4 family. MraY subfamily. It depends on Mg(2+) as a cofactor.

It localises to the cell inner membrane. It carries out the reaction UDP-N-acetyl-alpha-D-muramoyl-L-alanyl-gamma-D-glutamyl-meso-2,6-diaminopimeloyl-D-alanyl-D-alanine + di-trans,octa-cis-undecaprenyl phosphate = di-trans,octa-cis-undecaprenyl diphospho-N-acetyl-alpha-D-muramoyl-L-alanyl-D-glutamyl-meso-2,6-diaminopimeloyl-D-alanyl-D-alanine + UMP. Its pathway is cell wall biogenesis; peptidoglycan biosynthesis. Functionally, catalyzes the initial step of the lipid cycle reactions in the biosynthesis of the cell wall peptidoglycan: transfers peptidoglycan precursor phospho-MurNAc-pentapeptide from UDP-MurNAc-pentapeptide onto the lipid carrier undecaprenyl phosphate, yielding undecaprenyl-pyrophosphoryl-MurNAc-pentapeptide, known as lipid I. The chain is Phospho-N-acetylmuramoyl-pentapeptide-transferase from Chlorobium phaeovibrioides (strain DSM 265 / 1930) (Prosthecochloris vibrioformis (strain DSM 265)).